A 247-amino-acid polypeptide reads, in one-letter code: 3-deoxy-manno-octulosonate cytidylyltransferase (247 aa).

It belongs to the KdsB family.

The protein localises to the cytoplasm. The enzyme catalyses 3-deoxy-alpha-D-manno-oct-2-ulosonate + CTP = CMP-3-deoxy-beta-D-manno-octulosonate + diphosphate. The protein operates within nucleotide-sugar biosynthesis; CMP-3-deoxy-D-manno-octulosonate biosynthesis; CMP-3-deoxy-D-manno-octulosonate from 3-deoxy-D-manno-octulosonate and CTP: step 1/1. It functions in the pathway bacterial outer membrane biogenesis; lipopolysaccharide biosynthesis. Functionally, activates KDO (a required 8-carbon sugar) for incorporation into bacterial lipopolysaccharide in Gram-negative bacteria. The polypeptide is 3-deoxy-manno-octulosonate cytidylyltransferase (Methylobacterium radiotolerans (strain ATCC 27329 / DSM 1819 / JCM 2831 / NBRC 15690 / NCIMB 10815 / 0-1)).